We begin with the raw amino-acid sequence, 335 residues long: Hsp90 co-chaperone Cdc37-like 1 (335 aa).

Over residues 1–11 the composition is skewed to pro residues; it reads MEQPWPPPGPW. The segment at 1 to 42 is disordered; the sequence is MEQPWPPPGPWSFPRTGGETEEESDLDVSPSSSHYSPVPDGG. The self-association stretch occupies residues 2 to 170; the sequence is EQPWPPPGPW…YEQKIRHFGM (169 aa). Low complexity predominate over residues 27-40; the sequence is DVSPSSSHYSPVPD. Phosphoserine occurs at positions 32 and 88. Residues 84–120 adopt a coiled-coil conformation; it reads HNSESLDQEHAKAQTAVSELRQREEEWRQKEEALVQR. The segment at 147–276 is self-association and interaction with Hsp90; the sequence is KTEEEDKSQS…SRVRLYAQSQ (130 aa). Residues 266-335 form an interaction with Hsp70 region; it reads KSRVRLYAQS…EDDDRMMDTV (70 aa). The segment at 277-335 is required for interaction with STIP1; the sequence is SLQPVTVQNHVPHSGVGCIGSLESLPQNPDSLQCCTPAPLCSVDSVVHKEDDDRMMDTV.

The protein belongs to the CDC37 family. In terms of assembly, self-associates. Forms complexes with Hsp70 and Hsp90. Interacts with CDC37, FKBP4, PPID and STIP1.

The protein resides in the cytoplasm. Its function is as follows. Co-chaperone that binds to numerous proteins and promotes their interaction with Hsp70 and Hsp90. This Mus musculus (Mouse) protein is Hsp90 co-chaperone Cdc37-like 1 (Cdc37l1).